The chain runs to 743 residues: Mitochondrial exoribonuclease DSS-1 (743 aa).

The N-terminal 67 residues, 1-67 (MTPRRVAKLV…KELLHLQRSL (67 aa)), are a transit peptide targeting the mitochondrion. Positions 186–542 (THNPAYAIDS…VHHQLKVWLW (357 aa)) constitute an RNB domain. Residues 320–357 (VGNQHHHTERESTQASPAKREEGKKGMVASGGTSSCRP) form a disordered region. The span at 325 to 344 (HHTERESTQASPAKREEGKK) shows a compositional bias: basic and acidic residues.

This sequence belongs to the RNR ribonuclease family. In terms of assembly, component of the mitochondrial 3' processome (MPsome) complex composed at least of terminal uridylyltransferase KRET1/TUT1, 3'-5' exonuclease DSS1, MPSS1, MPSS2 and MPSS3. Within the complex, interacts with KRET1 and MPSS2. Component of the mitochondrial degradosome complex composed at least of 3'-5' exonuclease DSS1 and helicase SUV3. Within the complex, interacts with helicase SUV3.

It is found in the mitochondrion. The catalysed reaction is Exonucleolytic cleavage in the 3'- to 5'-direction to yield nucleoside 5'-phosphates.. 3'-5'exoribonuclease which is involved in the post-transcriptional processing, editing and degradation of mitochondrial RNAs, including mRNAs, rRNAs and guided RNAs (gRNA). As part of the mitochondrial 3' processome (MPsome), involved in the maturation of guided RNA (gRNA) precursors by catalyzing the processive 3'-5' degradation of uridylated gRNA precursors. Plays a role in the degradation of 12S rRNA processing intermediates and maturation by-products. This chain is Mitochondrial exoribonuclease DSS-1, found in Trypanosoma brucei brucei.